The sequence spans 279 residues: Large ribosomal subunit protein uL2 (279 aa).

Basic residues-rich tracts occupy residues 211 to 221 (GRSRWRGKTPH) and 256 to 279 (SYGK…RKGK). Residues 211 to 279 (GRSRWRGKTP…KFIVRGRKGK (69 aa)) form a disordered region.

It belongs to the universal ribosomal protein uL2 family. In terms of assembly, part of the 50S ribosomal subunit. Forms a bridge to the 30S subunit in the 70S ribosome.

In terms of biological role, one of the primary rRNA binding proteins. Required for association of the 30S and 50S subunits to form the 70S ribosome, for tRNA binding and peptide bond formation. It has been suggested to have peptidyltransferase activity; this is somewhat controversial. Makes several contacts with the 16S rRNA in the 70S ribosome. The protein is Large ribosomal subunit protein uL2 of Oenococcus oeni (strain ATCC BAA-331 / PSU-1).